We begin with the raw amino-acid sequence, 97 residues long: Putative defensin-like protein 227 (97 aa).

The first 26 residues, 1 to 26, serve as a signal peptide directing secretion; the sequence is MKWATLFMVSCVLMFFVMNNINEVES. 4 disulfide bridges follow: Cys-35/Cys-97, Cys-45/Cys-76, Cys-53/Cys-91, and Cys-74/Cys-93.

Belongs to the DEFL family.

It localises to the secreted. The chain is Putative defensin-like protein 227 (SCRL28) from Arabidopsis thaliana (Mouse-ear cress).